A 295-amino-acid chain; its full sequence is Apolipoprotein E (295 aa).

Positions 1–18 are cleaved as a signal peptide; it reads MKVLWAALLVTFLAGCQA. 6 tandem repeats follow at residues 80–101, 102–123, 124–145, 146–167, 193–211, and 212–233. The interval 80–233 is 6 X 22 AA approximate tandem repeats; the sequence is TLMDETMKEL…RLDEVKEQVA (154 aa). Met-143 carries the post-translational modification Methionine sulfoxide. Ser-147 is modified (phosphoserine). An LDL and other lipoprotein receptors binding region spans residues 158–168; sequence HLRKLRKRLLR. 162–165 provides a ligand contact to heparin; it reads LRKR. The tract at residues 191–268 is lipid-binding and lipoprotein association; the sequence is AATVGSLASQ…SWFEPLVEDM (78 aa). The homooligomerization stretch occupies residues 244–295; the sequence is QQISLQAEAFQARLKSWFEPLVEDMQRQWAGLVEKVQAAVGASTAPVPSDNH. Residues 256–268 are specificity for association with VLDL; that stretch reads RLKSWFEPLVEDM.

It belongs to the apolipoprotein A1/A4/E family. Homotetramer. May interact with ABCA1; functionally associated with ABCA1 in the biogenesis of HDLs. May interact with APP/A4 amyloid-beta peptide; the interaction is extremely stable in vitro but its physiological significance is unclear. May interact with MAPT. May interact with MAP2. In the cerebrospinal fluid, interacts with secreted SORL1. Interacts with PMEL; this allows the loading of PMEL luminal fragment on ILVs to induce fibril nucleation. APOE exists as multiple glycosylated and sialylated glycoforms within cells and in plasma. The extent of glycosylation and sialylation are tissue and context specific. Post-translationally, glycated in plasma VLDL. In terms of processing, phosphorylated by FAM20C in the extracellular medium.

It localises to the secreted. The protein localises to the extracellular space. The protein resides in the extracellular matrix. It is found in the extracellular vesicle. Its subcellular location is the endosome. It localises to the multivesicular body. APOE is an apolipoprotein, a protein associating with lipid particles, that mainly functions in lipoprotein-mediated lipid transport between organs via the plasma and interstitial fluids. APOE is a core component of plasma lipoproteins and is involved in their production, conversion and clearance. Apolipoproteins are amphipathic molecules that interact both with lipids of the lipoprotein particle core and the aqueous environment of the plasma. As such, APOE associates with chylomicrons, chylomicron remnants, very low density lipoproteins (VLDL) and intermediate density lipoproteins (IDL) but shows a preferential binding to high-density lipoproteins (HDL). It also binds a wide range of cellular receptors including the LDL receptor/LDLR, the LDL receptor-related proteins LRP1, LRP2 and LRP8 and the very low-density lipoprotein receptor/VLDLR that mediate the cellular uptake of the APOE-containing lipoprotein particles. Finally, APOE also has a heparin-binding activity and binds heparan-sulfate proteoglycans on the surface of cells, a property that supports the capture and the receptor-mediated uptake of APOE-containing lipoproteins by cells. A main function of APOE is to mediate lipoprotein clearance through the uptake of chylomicrons, VLDLs, and HDLs by hepatocytes. APOE is also involved in the biosynthesis by the liver of VLDLs as well as their uptake by peripheral tissues ensuring the delivery of triglycerides and energy storage in muscle, heart and adipose tissues. By participating in the lipoprotein-mediated distribution of lipids among tissues, APOE plays a critical role in plasma and tissues lipid homeostasis. APOE is also involved in two steps of reverse cholesterol transport, the HDLs-mediated transport of cholesterol from peripheral tissues to the liver, and thereby plays an important role in cholesterol homeostasis. First, it is functionally associated with ABCA1 in the biogenesis of HDLs in tissues. Second, it is enriched in circulating HDLs and mediates their uptake by hepatocytes. APOE also plays an important role in lipid transport in the central nervous system, regulating neuron survival and sprouting. This is Apolipoprotein E (APOE) from Macaca mulatta (Rhesus macaque).